A 183-amino-acid polypeptide reads, in one-letter code: ATP synthase subunit b, chloroplastic (183 aa).

Residues 33–51 (IINLSVVIGVVVSFGGDAL) traverse the membrane as a helical segment.

This sequence belongs to the ATPase B chain family. As to quaternary structure, F-type ATPases have 2 components, F(1) - the catalytic core - and F(0) - the membrane proton channel. F(1) has five subunits: alpha(3), beta(3), gamma(1), delta(1), epsilon(1). F(0) has four main subunits: a(1), b(1), b'(1) and c(10-14). The alpha and beta chains form an alternating ring which encloses part of the gamma chain. F(1) is attached to F(0) by a central stalk formed by the gamma and epsilon chains, while a peripheral stalk is formed by the delta, b and b' chains.

Its subcellular location is the plastid. The protein resides in the chloroplast thylakoid membrane. In terms of biological role, f(1)F(0) ATP synthase produces ATP from ADP in the presence of a proton or sodium gradient. F-type ATPases consist of two structural domains, F(1) containing the extramembraneous catalytic core and F(0) containing the membrane proton channel, linked together by a central stalk and a peripheral stalk. During catalysis, ATP synthesis in the catalytic domain of F(1) is coupled via a rotary mechanism of the central stalk subunits to proton translocation. Component of the F(0) channel, it forms part of the peripheral stalk, linking F(1) to F(0). This chain is ATP synthase subunit b, chloroplastic, found in Oltmannsiellopsis viridis (Marine flagellate).